The primary structure comprises 636 residues: Threonine--tRNA ligase (636 aa).

Residues 1-61 enclose the TGS domain; it reads MINITLPDGK…ETDASVVFIT (61 aa). The catalytic stretch occupies residues 238–528; sequence DHRKLGTALD…LIEHYAGKFP (291 aa). 3 residues coordinate Zn(2+): C329, H380, and H505.

This sequence belongs to the class-II aminoacyl-tRNA synthetase family. In terms of assembly, homodimer. It depends on Zn(2+) as a cofactor.

It is found in the cytoplasm. It carries out the reaction tRNA(Thr) + L-threonine + ATP = L-threonyl-tRNA(Thr) + AMP + diphosphate + H(+). Functionally, catalyzes the attachment of threonine to tRNA(Thr) in a two-step reaction: L-threonine is first activated by ATP to form Thr-AMP and then transferred to the acceptor end of tRNA(Thr). Also edits incorrectly charged L-seryl-tRNA(Thr). The polypeptide is Threonine--tRNA ligase (Desulfatibacillum aliphaticivorans).